Here is a 271-residue protein sequence, read N- to C-terminus: Cell surface glycoprotein CD200 receptor 2 (271 aa).

The first 23 residues, 1–23 (MSAPRLLISIIIMVSASSSSCMG), serve as a signal peptide directing secretion. Over 24-239 (GKQMTQNYST…TSGSPALSLL (216 aa)) the chain is Extracellular. N-linked (GlcNAc...) asparagine glycosylation is found at N30, N39, N86, N92, N189, and N217. The Ig-like V-type domain maps to 46–132 (MDINAVLCCP…YRGIVVTPDG (87 aa)). The region spanning 133 to 221 (NFHRGYHLQV…SHLTGNKSLS (89 aa)) is the Ig-like C2-type domain. A disulfide bridge connects residues C160 and C209. The helical transmembrane segment at 240–260 (IILYVKLSLFVVILVTTGFVF) threads the bilayer. At 261–271 (FQRINHVRKVL) the chain is on the cytoplasmic side.

Belongs to the CD200R family.

The protein localises to the membrane. Functionally, may be a receptor for the CD200/OX2 cell surface glycoprotein. The chain is Cell surface glycoprotein CD200 receptor 2 (CD200R1L) from Homo sapiens (Human).